The sequence spans 181 residues: Oligoribonuclease (181 aa).

The 164-residue stretch at 8 to 171 (LIWIDMEMTG…ADIYDSIEEL (164 aa)) folds into the Exonuclease domain. Tyr129 is a catalytic residue.

This sequence belongs to the oligoribonuclease family.

It is found in the cytoplasm. In terms of biological role, 3'-to-5' exoribonuclease specific for small oligoribonucleotides. The polypeptide is Oligoribonuclease (Nitrosomonas europaea (strain ATCC 19718 / CIP 103999 / KCTC 2705 / NBRC 14298)).